A 402-amino-acid chain; its full sequence is MEAHEIIEEPHITMDAEKHPPSKDPSAEDLQENHISESFLKPSTSETPLEPHTSESPLVPSPSQIPLEAHSPETHQEPSISETPSETPTYEASLDSPISVVPEKHLTLPPQSRDYVCLSSSDTLKEDLSSESSSNEVPWTRRSTHLSESESLPEHCLSGPSSQVQVDTTEKQEEEAGEVEKGVDASDSTAHTAQPGHQLGNTARPVFPARQTELVEVAKAMHREEFGAQVNNLFQWEKDAALNAIQTGLYIGWRCPHYLWDCFRIGDESRCFCGHLLREHRIISDISVPCKVSQCRCFMFCFIPSRPEEVGEFWLKRRATFDPKAWRAQCRCKHSHEEHAATGPHPCRHHGCCCGCFESNFLCAACDRRWEEHETFFDTQKTRQRGGRPRGTDTVSNWHRPL.

Residues 1 to 35 (MEAHEIIEEPHITMDAEKHPPSKDPSAEDLQENHI) show a composition bias toward basic and acidic residues. Disordered stretches follow at residues 1–205 (MEAH…TARP) and 378–402 (DTQK…HRPL). Composition is skewed to polar residues over residues 77–90 (EPSI…TPTY) and 393–402 (DTVSNWHRPL).

Belongs to the FAM221 family.

The protein is Protein FAM221B (FAM221B) of Homo sapiens (Human).